The primary structure comprises 256 residues: Probable transcriptional regulatory protein A1I_03240 (256 aa).

A disordered region spans residues 1-21 (MAGHSKFKNIQHRKGAQDKKR).

Belongs to the TACO1 family.

Its subcellular location is the cytoplasm. In Rickettsia bellii (strain OSU 85-389), this protein is Probable transcriptional regulatory protein A1I_03240.